Consider the following 182-residue polypeptide: UPF0301 protein MCA0413 1 (182 aa).

Belongs to the UPF0301 (AlgH) family.

The protein is UPF0301 protein MCA0413 1 of Methylococcus capsulatus (strain ATCC 33009 / NCIMB 11132 / Bath).